The chain runs to 33 residues: Pardaxin P-2 (33 aa).

It belongs to the pardaxin family. As to quaternary structure, in aqueous solution exists as a tetramer.

The protein localises to the secreted. Its subcellular location is the target cell membrane. Functionally, exhibits unusual shark repellent and surfactant properties. Forms voltage-dependent, ion-permeable channels in membranes. At high concentration causes cell membrane lysis. The polypeptide is Pardaxin P-2 (Pardachirus pavoninus (Peacock sole)).